The chain runs to 336 residues: MKRIAVLTSGGDAPGMNAAIRAVVRKAISEGMEVYGIYDGYAGMVAGEIYPLDATSVGDIISRGGTFLHSARYPEFAQVEGQLKGIEQLKKHGIEGVVVIGGDGSYHGAMRLTEHGFPAVGVPGTIDNDIVGTDFTIGFDTAVTTAMDAIDKIRDTSSSHRRTFVIEVMGRNAGDIALWAGIASGADEIIVPEEGFKIEEVVESIKNGYAKGKKHNIIVLAEGVMSADEFAEKLKEAGDMSDLRVTELGHIQRGGSPTARDRVLASRMGAHAVKLLKEGIGGVAVGIRNEQMVESPILGTAEEGALFSLTAEGKIVVNNPHKADLDLADLNRSINI.

G11 is a binding site for ATP. 21-25 (RAVVR) contributes to the ADP binding site. ATP is bound by residues 72–73 (RY) and 102–105 (GDGS). Position 103 (D103) interacts with Mg(2+). 125–127 (TID) serves as a coordination point for substrate. D127 (proton acceptor) is an active-site residue. Residue R154 participates in ADP binding. Residues R162 and 169-171 (MGR) each bind substrate. ADP is bound by residues 185-187 (GAD), K211, and 213-215 (KKH). Substrate-binding positions include E222, R244, and 250 to 253 (HIQR).

Belongs to the phosphofructokinase type A (PFKA) family. ATP-dependent PFK group I subfamily. Prokaryotic clade 'B1' sub-subfamily. In terms of assembly, homotetramer. Requires Mg(2+) as cofactor.

It localises to the cytoplasm. The catalysed reaction is beta-D-fructose 6-phosphate + ATP = beta-D-fructose 1,6-bisphosphate + ADP + H(+). The protein operates within carbohydrate degradation; glycolysis; D-glyceraldehyde 3-phosphate and glycerone phosphate from D-glucose: step 3/4. Its activity is regulated as follows. Allosterically activated by ADP and other diphosphonucleosides, and allosterically inhibited by phosphoenolpyruvate. Its function is as follows. Catalyzes the phosphorylation of D-fructose 6-phosphate to fructose 1,6-bisphosphate by ATP, the first committing step of glycolysis. This Streptococcus sanguinis (strain SK36) protein is ATP-dependent 6-phosphofructokinase.